The primary structure comprises 109 residues: Large ribosomal subunit protein uL22 (109 aa).

It belongs to the universal ribosomal protein uL22 family. Part of the 50S ribosomal subunit.

In terms of biological role, this protein binds specifically to 23S rRNA; its binding is stimulated by other ribosomal proteins, e.g. L4, L17, and L20. It is important during the early stages of 50S assembly. It makes multiple contacts with different domains of the 23S rRNA in the assembled 50S subunit and ribosome. Its function is as follows. The globular domain of the protein is located near the polypeptide exit tunnel on the outside of the subunit, while an extended beta-hairpin is found that lines the wall of the exit tunnel in the center of the 70S ribosome. The sequence is that of Large ribosomal subunit protein uL22 from Neisseria gonorrhoeae (strain ATCC 700825 / FA 1090).